We begin with the raw amino-acid sequence, 258 residues long: Putative cysteine-rich repeat secretory protein 16 (258 aa).

Positions 1-30 (MYYSSPTCFVLITIFAVVVTQLIFMRTVSS) are cleaved as a signal peptide. 2 consecutive Gnk2-homologous domains span residues 37–139 (YLNH…PFDT) and 144–247 (DKDN…LYPF).

Belongs to the cysteine-rich repeat secretory protein family.

The protein resides in the secreted. This Arabidopsis thaliana (Mouse-ear cress) protein is Putative cysteine-rich repeat secretory protein 16 (CRRSP16).